Consider the following 32-residue polypeptide: Hainantoxin F8-35.23 (32 aa).

As to expression, expressed by the venom gland.

It is found in the secreted. This is Hainantoxin F8-35.23 from Cyriopagopus hainanus (Chinese bird spider).